A 459-amino-acid chain; its full sequence is uncharacterized protein (459 aa).

The tract at residues 28-47 (AHDEELTGPPQKPAYAAKPA) is disordered. The region spanning 35–214 (GPPQKPAYAA…TEVIVKLHPR (180 aa)) is the FAD-binding PCMH-type domain.

Belongs to the oxygen-dependent FAD-linked oxidoreductase family. It depends on FAD as a cofactor.

This is an uncharacterized protein from Mycobacterium tuberculosis (strain CDC 1551 / Oshkosh).